A 296-amino-acid chain; its full sequence is Acetylglutamate kinase (296 aa).

Residues 69–70, Arg-91, and Asn-193 each bind substrate; that span reads GG.

The protein belongs to the acetylglutamate kinase family. ArgB subfamily.

The protein resides in the cytoplasm. It carries out the reaction N-acetyl-L-glutamate + ATP = N-acetyl-L-glutamyl 5-phosphate + ADP. It participates in amino-acid biosynthesis; L-arginine biosynthesis; N(2)-acetyl-L-ornithine from L-glutamate: step 2/4. In terms of biological role, catalyzes the ATP-dependent phosphorylation of N-acetyl-L-glutamate. This Verminephrobacter eiseniae (strain EF01-2) protein is Acetylglutamate kinase.